The chain runs to 443 residues: Ribosomal protein uS12 methylthiotransferase RimO (443 aa).

The 111-residue stretch at 10–120 folds into the MTTase N-terminal domain; sequence PRVGFVSLGC…VMQAVHRHLP (111 aa). [4Fe-4S] cluster is bound by residues Cys-19, Cys-55, Cys-84, Cys-151, Cys-155, and Cys-158. Positions 137–375 constitute a Radical SAM core domain; that stretch reads LTPQHYAYLK…DFQEDISTQR (239 aa). One can recognise a TRAM domain in the interval 377 to 443; that stretch reads EAKIGREMTV…IHDLYAERVV (67 aa).

It belongs to the methylthiotransferase family. RimO subfamily. The cofactor is [4Fe-4S] cluster.

It is found in the cytoplasm. It catalyses the reaction L-aspartate(89)-[ribosomal protein uS12]-hydrogen + (sulfur carrier)-SH + AH2 + 2 S-adenosyl-L-methionine = 3-methylsulfanyl-L-aspartate(89)-[ribosomal protein uS12]-hydrogen + (sulfur carrier)-H + 5'-deoxyadenosine + L-methionine + A + S-adenosyl-L-homocysteine + 2 H(+). Functionally, catalyzes the methylthiolation of an aspartic acid residue of ribosomal protein uS12. The polypeptide is Ribosomal protein uS12 methylthiotransferase RimO (Azoarcus sp. (strain BH72)).